We begin with the raw amino-acid sequence, 351 residues long: MLETLRERLLSVQQDFTSGLKTLGDKSREAKKSRQRTAQCSPEFSAGLELLSRYEDAWAALHKGAKDCAKAGELVDSEVVMLSAHWEKKRNSLVELQDQLQQIPGFLADLECLTASLARLEANFEEMETHLLCLEDLCEQCELERYKCVQTLQLENYKKTKRKELENFKAELDAEHAQKVLDMEHTQQMKLKERQKFFEEAFQQDMEQYLSTGYLQIAERREPIGSMSSMEVNVDMLEQMDLMDMSDQEALDVFLNSGGEDNNMLSPMLGPDSSTYVNEISLQVPSQSELRHKLSSLSSTCTDSASQEASEGESPVVQSDEEEVQVDTALAAVAERKGASDVSDESDSQTI.

A coiled-coil region spans residues 106 to 179 (FLADLECLTA…AELDAEHAQK (74 aa)). A disordered region spans residues 291–325 (RHKLSSLSSTCTDSASQEASEGESPVVQSDEEEVQ). Positions 295–306 (SSLSSTCTDSAS) are enriched in low complexity.

It belongs to the dysbindin family. In terms of assembly, component of the biogenesis of lysosome-related organelles complex 1 (BLOC-1).

It localises to the cytoplasm. The protein resides in the cytoplasmic vesicle membrane. It is found in the cytoplasmic vesicle. The protein localises to the secretory vesicle. Its subcellular location is the synaptic vesicle membrane. It localises to the endosome membrane. The protein resides in the melanosome membrane. It is found in the nucleus. The protein localises to the postsynaptic density. Its subcellular location is the endoplasmic reticulum. In terms of biological role, component of the BLOC-1 complex, a complex that is required for normal biogenesis of lysosome-related organelles (LRO), such as platelet dense granules and melanosomes. Plays a role in intracellular vesicle trafficking. Plays a role in synaptic vesicle trafficking and in neurotransmitter release. May be required for normal dopamine homeostasis in the cerebral cortex, hippocampus, and hypothalamus. Plays a role in the regulation of cell surface exposure of DRD2. Contributes to the regulation of dopamine signaling. May play a role in actin cytoskeleton reorganization and neurite outgrowth. This is Dysbindin (DTNBP1) from Gallus gallus (Chicken).